Reading from the N-terminus, the 488-residue chain is GTPase Der (488 aa).

EngA-type G domains lie at 3 to 166 (PVVA…AEAM) and 199 to 372 (IKLA…DSAT). Residues 9-16 (GRPNVGKS), 56-60 (DTGGI), 118-121 (NKID), 205-212 (GKPNVGKS), 252-256 (DTAGV), and 317-320 (NKWD) each bind GTP. The KH-like domain occupies 373 to 457 (RRVSTSMLTR…PIQLRFQEGD (85 aa)).

Belongs to the TRAFAC class TrmE-Era-EngA-EngB-Septin-like GTPase superfamily. EngA (Der) GTPase family. Associates with the 50S ribosomal subunit.

Its function is as follows. GTPase that plays an essential role in the late steps of ribosome biogenesis. This Shewanella sp. (strain MR-7) protein is GTPase Der.